The primary structure comprises 751 residues: Photosystem I P700 chlorophyll a apoprotein A1 (751 aa).

Transmembrane regions (helical) follow at residues 73–96 (VFSA…FHGA), 159–182 (LYTT…FHYH), 198–222 (LNHH…HVSL), 294–312 (TAHH…GHMY), 349–372 (WHAQ…HHMY), 388–414 (LSLF…IFMV), 436–458 (AIIS…LYIH), and 533–551 (FMVH…LILL). [4Fe-4S] cluster-binding residues include cysteine 575 and cysteine 584. 2 helical membrane passes run 591–612 (HVFL…HFSW) and 665–687 (LSAY…LDIF). Histidine 676 is a chlorophyll a' binding site. 2 residues coordinate chlorophyll a: methionine 683 and tyrosine 692. Tryptophan 693 contributes to the phylloquinone binding site. A helical transmembrane segment spans residues 725-745 (AVGVAHYLLGGIATTWSFFLA).

Belongs to the PsaA/PsaB family. The PsaA/B heterodimer binds the P700 chlorophyll special pair and subsequent electron acceptors. PSI consists of a core antenna complex that captures photons, and an electron transfer chain that converts photonic excitation into a charge separation. The eukaryotic PSI reaction center is composed of at least 11 subunits. It depends on P700 is a chlorophyll a/chlorophyll a' dimer, A0 is one or more chlorophyll a, A1 is one or both phylloquinones and FX is a shared 4Fe-4S iron-sulfur center. as a cofactor.

It is found in the plastid. The protein resides in the chloroplast thylakoid membrane. It catalyses the reaction reduced [plastocyanin] + hnu + oxidized [2Fe-2S]-[ferredoxin] = oxidized [plastocyanin] + reduced [2Fe-2S]-[ferredoxin]. In terms of biological role, psaA and PsaB bind P700, the primary electron donor of photosystem I (PSI), as well as the electron acceptors A0, A1 and FX. PSI is a plastocyanin/cytochrome c6-ferredoxin oxidoreductase, converting photonic excitation into a charge separation, which transfers an electron from the donor P700 chlorophyll pair to the spectroscopically characterized acceptors A0, A1, FX, FA and FB in turn. Oxidized P700 is reduced on the lumenal side of the thylakoid membrane by plastocyanin or cytochrome c6. The polypeptide is Photosystem I P700 chlorophyll a apoprotein A1 (Stigeoclonium helveticum (Green alga)).